Consider the following 276-residue polypeptide: MYKERSGGGGGGSSRSEILGGAIDRKRINDALNKKLEKSSTSTTTSRVFSSKDKDPFSFTSTKTQLPDVESETDSEGSDVSGSEGDDTSWISWFCNLRGNDFFCEVDEDYIQDDFNLCGLSGQVPYYDYALDLILDVDASNSEMFTDEQHEMVESAAEMLYGLIHVRYILTTKGMAAMTEKYKNCDFGRCPRVFCCGQSCLPVGQSDIPRSSTVKIYCPKCEDISYPRSKFQGNIDGAYFGTTFPHLFLMTYGNLKPQKPTQSYVPKIFGFKVHKP.

2 disordered regions span residues 1 to 22 (MYKE…LGGA) and 34 to 86 (KKLE…SEGD).

It belongs to the casein kinase 2 subunit beta family. Heterotetramer of two catalytic alpha subunits and two regulatory beta subunits. Interacts with CCA1. Interacts with LHY. Post-translationally, phosphorylated by alpha subunit.

The protein localises to the cytoplasm. The protein resides in the cytosol. Its subcellular location is the nucleus. In terms of biological role, plays a complex role in regulating the basal catalytic activity of the alpha subunit. The tetrameric holoenzyme CK2, composed of two alpha and two beta subunits, phosphorylates the transcription factor PIF1 after an exposure to light, resulting in a proteasome-dependent degradation of PIF1 and promotion of photomorphogenesis. CK2 phosphorylates translation initiation factors. May participate in the regulation of the initiation of translation. Stimulates the binding of CCA1 to promoters. The polypeptide is Casein kinase II subunit beta-3 (CKB3) (Arabidopsis thaliana (Mouse-ear cress)).